The sequence spans 526 residues: Cholesterol side-chain cleavage enzyme, mitochondrial (526 aa).

Residues 1–36 (MLAKGLSLRSVLVKGCQPFLSPTWQGPVLSTGKGAG) constitute a mitochondrion transit peptide. Low complexity predominate over residues 30–41 (STGKGAGTSTSS). The interval 30-49 (STGKGAGTSTSSPRSFNEIP) is disordered. Cys-458 contributes to the heme binding site.

The protein belongs to the cytochrome P450 family. In terms of assembly, interacts with FDX1/adrenodoxin. It depends on heme as a cofactor.

The protein resides in the mitochondrion inner membrane. It catalyses the reaction 6 reduced [adrenodoxin] + cholesterol + 3 O2 + 6 H(+) = 4-methylpentanal + pregnenolone + 6 oxidized [adrenodoxin] + 4 H2O. The enzyme catalyses 2 reduced [adrenodoxin] + cholesterol + O2 + 2 H(+) = (22R)-hydroxycholesterol + 2 oxidized [adrenodoxin] + H2O. The catalysed reaction is (22R)-hydroxycholesterol + 2 reduced [adrenodoxin] + O2 + 2 H(+) = (20R,22R)-20,22-dihydroxycholesterol + 2 oxidized [adrenodoxin] + H2O. It carries out the reaction (20R,22R)-20,22-dihydroxycholesterol + 2 reduced [adrenodoxin] + O2 + 2 H(+) = 4-methylpentanal + pregnenolone + 2 oxidized [adrenodoxin] + 2 H2O. It participates in lipid metabolism; C21-steroid hormone metabolism. It functions in the pathway steroid metabolism; cholesterol metabolism. Functionally, a cytochrome P450 monooxygenase that catalyzes the side-chain hydroxylation and cleavage of cholesterol to pregnenolone, the precursor of most steroid hormones. Catalyzes three sequential oxidation reactions of cholesterol, namely the hydroxylation at C22 followed with the hydroxylation at C20 to yield 20R,22R-hydroxycholesterol that is further cleaved between C20 and C22 to yield the C21-steroid pregnenolone and 4-methylpentanal. Mechanistically, uses molecular oxygen inserting one oxygen atom into a substrate and reducing the second into a water molecule. Two electrons are provided by NADPH via a two-protein mitochondrial transfer system comprising flavoprotein FDXR (adrenodoxin/ferredoxin reductase) and nonheme iron-sulfur protein FDX1 or FDX2 (adrenodoxin/ferredoxin). In Mus musculus (Mouse), this protein is Cholesterol side-chain cleavage enzyme, mitochondrial.